The sequence spans 383 residues: METVVVIVGAGPAGLATSVCLNQHSIPNVILEKEDIYASLWKKRAYDRLKLHLAKEFCQLPFMPHGREVPTFMSKELFVNYLDAYVARFDINPRYNRTVKSSTFDESNNKWRVVAENTVTGETEVYWSEFLVVATGENGDGNIPMVEGIDTFGGEIMHSSEYKSGRDFKDKNVLVVGGGNSGMEISFDLCNFGANTTILIRTPRHVVTKEVIHLGMTLLKYAPVAMVDTLVTTMAKILYGDLSKYGLFRPKQGPFATKLFTGKAPVIDVGTVEKIRDGEIQVINGGIGSINGKTLTFENGHKQDFDAIVFATGYKSSVCNWLEDYEYVMKKDGFPKAPMPKHWKGEKNLYCAGFSRKGIAGGAEDAMSVADDIRSILATLKNN.

9–14 lines the FAD pocket; it reads GAGPAG. Residue 177 to 182 coordinates NADP(+); sequence GGGNSG.

This sequence belongs to the FMO family. The cofactor is FAD.

It catalyses the reaction indole-3-pyruvate + NADPH + O2 + H(+) = (indol-3-yl)acetate + CO2 + NADP(+) + H2O. Its pathway is plant hormone metabolism; auxin biosynthesis. In terms of biological role, involved in auxin biosynthesis. This is Probable indole-3-pyruvate monooxygenase YUCCA10 (YUC10) from Arabidopsis thaliana (Mouse-ear cress).